A 261-amino-acid polypeptide reads, in one-letter code: Transmembrane and immunoglobulin domain-containing protein 1 (261 aa).

The signal sequence occupies residues 1 to 27 (MAQKTSGLIQRCRFLLLMILFLPHVMT). The Ig-like C2-type 1 domain occupies 28–114 (SSVLSVNGKT…LQRNQSVSIS (87 aa)). Over 28–219 (SSVLSVNGKT…IVKDKGSTVP (192 aa)) the chain is Extracellular. A disulfide bridge connects residues Cys-54 and Cys-103. Residues Asn-83, Asn-108, Asn-118, and Asn-189 are each glycosylated (N-linked (GlcNAc...) asparagine). In terms of domain architecture, Ig-like C2-type 2 spans 122 to 208 (PPLLSGNDFQ…LIETKTKDFH (87 aa)). An intrachain disulfide couples Cys-143 to Cys-194. The chain crosses the membrane as a helical span at residues 220-240 (IEPIIAACVVVFLTLVFGVIA). Residues 241–261 (RRKRIMKLCRKDQGPQCRTAL) are Cytoplasmic-facing.

In terms of assembly, homodimer. N-glycosylated.

It localises to the cell membrane. It is found in the cytoplasm. May control cell-cell adhesion, cell migration and proliferation, cell morphology, and protects renal epithelial cells from oxidative cell injury to promote cell survival. This Bos taurus (Bovine) protein is Transmembrane and immunoglobulin domain-containing protein 1.